The primary structure comprises 567 residues: TGF-beta receptor type-2 (567 aa).

Residues 1–23 (MGRGLLRGLWPLHIVLWTRIAST) form the signal peptide. Over 24 to 166 (IPPHVPKSVN…SPDLLLVIIQ (143 aa)) the chain is Extracellular. 6 disulfides stabilise this stretch: Cys51–Cys84, Cys54–Cys71, Cys61–Cys67, Cys77–Cys101, Cys121–Cys136, and Cys138–Cys143. N-linked (GlcNAc...) asparagine glycans are attached at residues Asn70 and Asn94. Residues 167–187 (VTGVSLLPPLGIAIAVIIIFY) traverse the membrane as a helical segment. The Cytoplasmic segment spans residues 188–567 (CYRVHRQQKL…PEDGSLNTTK (380 aa)). Residues 244-546 (IELDTLVGKG…RFSELEHPER (303 aa)) enclose the Protein kinase domain. ATP contacts are provided by residues 250 to 258 (VGKGRFAEV) and Lys277. The Proton acceptor role is filled by Asp379. Residues Ser409, Ser548, and Ser553 each carry the phosphoserine modification. The interval 545 to 567 (ERLSGRSCSQEKIPEDGSLNTTK) is disordered.

This sequence belongs to the protein kinase superfamily. TKL Ser/Thr protein kinase family. TGFB receptor subfamily. As to quaternary structure, homodimer. Heterohexamer; TGFB1, TGFB2 and TGFB3 homodimeric ligands assemble a functional receptor composed of two TGFBR1 and TGFBR2 heterodimers to form a ligand-receptor heterohexamer. The respective affinity of TGFRB1 and TGFRB2 for the ligands may modulate the kinetics of assembly of the receptor and may explain the different biological activities of TGFB1, TGFB2 and TGFB3. Component of a complex composed of TSC22D1 (via N-terminus), TGFBR1 and TGFBR2; the interaction between TSC22D1 and TGFBR1 is inhibited by SMAD7 and promoted by TGFB1. Interacts with DAXX. Interacts with DYNLT4. Interacts with ZFYVE9; ZFYVE9 recruits SMAD2 and SMAD3 to the TGF-beta receptor. Interacts with and is activated by SCUBE3; this interaction does not affect TGFB1-binding to TGFBR2. Interacts with VPS39; this interaction is independent of the receptor kinase activity and of the presence of TGF-beta. Interacts with CLU. Mg(2+) is required as a cofactor. Requires Mn(2+) as cofactor. Post-translationally, phosphorylated on a Ser/Thr residue in the cytoplasmic domain. Widely expressed in adult. Expressed primarily in mesenchyme and epidermis of the midgestational fetus.

It is found in the cell membrane. The protein localises to the membrane raft. The enzyme catalyses L-threonyl-[receptor-protein] + ATP = O-phospho-L-threonyl-[receptor-protein] + ADP + H(+). It catalyses the reaction L-seryl-[receptor-protein] + ATP = O-phospho-L-seryl-[receptor-protein] + ADP + H(+). In terms of biological role, transmembrane serine/threonine kinase forming with the TGF-beta type I serine/threonine kinase receptor, TGFBR1, the non-promiscuous receptor for the TGF-beta cytokines TGFB1, TGFB2 and TGFB3. Transduces the TGFB1, TGFB2 and TGFB3 signal from the cell surface to the cytoplasm and is thus regulating a plethora of physiological and pathological processes including cell cycle arrest in epithelial and hematopoietic cells, control of mesenchymal cell proliferation and differentiation, wound healing, extracellular matrix production, immunosuppression and carcinogenesis. The formation of the receptor complex composed of 2 TGFBR1 and 2 TGFBR2 molecules symmetrically bound to the cytokine dimer results in the phosphorylation and the activation of TGFRB1 by the constitutively active TGFBR2. Activated TGFBR1 phosphorylates SMAD2 which dissociates from the receptor and interacts with SMAD4. The SMAD2-SMAD4 complex is subsequently translocated to the nucleus where it modulates the transcription of the TGF-beta-regulated genes. This constitutes the canonical SMAD-dependent TGF-beta signaling cascade. Also involved in non-canonical, SMAD-independent TGF-beta signaling pathways. Its function is as follows. Has transforming growth factor beta-activated receptor activity. The protein is TGF-beta receptor type-2 (Tgfbr2) of Mus musculus (Mouse).